A 471-amino-acid polypeptide reads, in one-letter code: Cell division protein FtsP (471 aa).

The tat-type signal signal peptide spans 1-27 (MSLSRRSFLQASGVALAAGALPLKAEA). In terms of domain architecture, Plastocyanin-like spans 229–288 (VRLRLLNASNARRYELSMTDNRAFHVVASDLGFLPAPMTVKRLSLGPGERREVLVDMSQG).

It belongs to the FtsP family. In terms of processing, predicted to be exported by the Tat system. The position of the signal peptide cleavage has not been experimentally proven.

It is found in the periplasm. Its function is as follows. Cell division protein that is required for growth during stress conditions. May be involved in protecting or stabilizing the divisomal assembly under conditions of stress. This Rahnella sp. (strain Y9602) protein is Cell division protein FtsP.